We begin with the raw amino-acid sequence, 380 residues long: MTADGNDVTPYAVESDDLDYEKLLARFGADELTDDQRARFPDHPLVNRGLFYAGRDVDDFLTAGEQSIVTGVGPSGPMHLGHAMVFYFARRLQDEFGARVYVPLSDDEKYWFKDQTPAETGDYLRANLRDLLAVGFDPELTRIVVDTRDADVLYPLATAFAGDVRHATLQNVYGEPDNVGQAFYPAVQTAHLLLPQLVHGEHETLVPIAVDQDPHVRVSRDVAAKARYPVGKPGALLMQFLPSLAGPGKMSSSAGVSIRLTDSPDTVREKVRTHAYTGGRASVEEHRAKGGVPAEDVPFQYLSAFFEPDDAELARIEREYRAGDLLSGELKDLAADRITEFLAAHQRRRAALGDVTEALDAFRLTDDERQRARDAVGFGY.

Residues 74–82 (PSGPMHLGH) carry the 'HIGH' region motif. The 'KMSKS' region signature appears at 249–253 (KMSSS).

It belongs to the class-I aminoacyl-tRNA synthetase family.

The protein resides in the cytoplasm. It carries out the reaction tRNA(Trp) + L-tryptophan + ATP = L-tryptophyl-tRNA(Trp) + AMP + diphosphate + H(+). The chain is Tryptophan--tRNA ligase 2 from Halobacterium salinarum (strain ATCC 700922 / JCM 11081 / NRC-1) (Halobacterium halobium).